A 257-amino-acid chain; its full sequence is Imidazole glycerol phosphate synthase subunit HisF (257 aa).

Active-site residues include aspartate 11 and aspartate 130.

Belongs to the HisA/HisF family. Heterodimer of HisH and HisF.

It is found in the cytoplasm. The enzyme catalyses 5-[(5-phospho-1-deoxy-D-ribulos-1-ylimino)methylamino]-1-(5-phospho-beta-D-ribosyl)imidazole-4-carboxamide + L-glutamine = D-erythro-1-(imidazol-4-yl)glycerol 3-phosphate + 5-amino-1-(5-phospho-beta-D-ribosyl)imidazole-4-carboxamide + L-glutamate + H(+). It participates in amino-acid biosynthesis; L-histidine biosynthesis; L-histidine from 5-phospho-alpha-D-ribose 1-diphosphate: step 5/9. Its function is as follows. IGPS catalyzes the conversion of PRFAR and glutamine to IGP, AICAR and glutamate. The HisF subunit catalyzes the cyclization activity that produces IGP and AICAR from PRFAR using the ammonia provided by the HisH subunit. The sequence is that of Imidazole glycerol phosphate synthase subunit HisF from Actinobacillus succinogenes (strain ATCC 55618 / DSM 22257 / CCUG 43843 / 130Z).